A 248-amino-acid polypeptide reads, in one-letter code: Polyhedrin (248 aa).

The N-terminal stretch at 1–27 (MADVAGTSNRDFRGREQRLFNSEQYNY) is a signal peptide. N-linked (GlcNAc...) asparagine; by host glycosylation is found at Asn-28, Asn-77, Asn-86, and Asn-237.

It is found in the host cytoplasm. Functionally, major component of the virus occlusion bodies, which are large proteinaceous structures (polyhedra), that protect the virus from the outside environment for extended periods until they are ingested by insect larvae. The chain is Polyhedrin from Bombyx mori cytoplasmic polyhedrosis virus (BmCPV).